A 384-amino-acid polypeptide reads, in one-letter code: tRNA(Met) cytidine acetate ligase (384 aa).

ATP is bound by residues 7-20 (VAEY…HEFL), glycine 101, asparagine 153, and arginine 178.

This sequence belongs to the TmcAL family.

The protein resides in the cytoplasm. It carries out the reaction cytidine(34) in elongator tRNA(Met) + acetate + ATP = N(4)-acetylcytidine(34) in elongator tRNA(Met) + AMP + diphosphate. Its function is as follows. Catalyzes the formation of N(4)-acetylcytidine (ac(4)C) at the wobble position of elongator tRNA(Met), using acetate and ATP as substrates. First activates an acetate ion to form acetyladenylate (Ac-AMP) and then transfers the acetyl group to tRNA to form ac(4)C34. The protein is tRNA(Met) cytidine acetate ligase of Lactobacillus delbrueckii subsp. bulgaricus (strain ATCC BAA-365 / Lb-18).